The following is a 513-amino-acid chain: RNA-binding protein FUS (513 aa).

Residues Met-1 to Tyr-14 show a composition bias toward polar residues. Residues Met-1 to Thr-273 form a disordered region. 3 stretches are compositionally biased toward low complexity: residues Gln-20–Gln-36, Gln-43–Gln-63, and Ser-84–Gly-124. Residues Gln-125–Gly-139 are compositionally biased toward gly residues. Residues Gln-140–Ser-164 show a composition bias toward low complexity. Gly residues-rich tracts occupy residues Ser-165 to Tyr-176 and Ser-185 to Tyr-219. Asymmetric dimethylarginine; alternate is present on residues Arg-211 and Arg-213. Arg-211 and Arg-213 each carry omega-N-methylarginine; alternate. 5 positions are modified to asymmetric dimethylarginine: Arg-229, Arg-231, Arg-235, Arg-238, and Arg-246. The segment covering Arg-231–Arg-246 has biased composition (gly residues). Ser-264 is subject to Phosphoserine. Residues Asn-272 to Arg-358 enclose the RRM domain. Thr-273 is modified (phosphothreonine). Lys-321 participates in a covalent cross-link: Glycyl lysine isopeptide (Lys-Gly) (interchain with G-Cter in SUMO2). The residue at position 327 (Ser-327) is a Phosphoserine. 2 disordered regions span residues Phe-362–Gly-411 and Cys-431–Tyr-513. Asymmetric dimethylarginine is present on residues Arg-364, Arg-370, Arg-373, Arg-375, and Arg-381. Gly residues predominate over residues Arg-364–Gln-408. Position 394 is an asymmetric dimethylarginine; alternate (Arg-394). Arg-394 is subject to Omega-N-methylarginine; alternate. Residues Arg-409–Asp-440 form a RanBP2-type zinc finger. Gly residues predominate over residues Gly-441–Tyr-455. The segment covering Gly-456–Gly-480 has biased composition (basic and acidic residues). Residues Arg-460, Arg-463, Arg-468, Arg-472, Arg-474, Arg-478, Arg-482, and Arg-485 each carry the asymmetric dimethylarginine modification. The segment covering Phe-481–Pro-495 has biased composition (gly residues). Arg-490 carries the asymmetric dimethylarginine; alternate modification. Arg-490 is subject to Omega-N-methylarginine; alternate. Over residues Met-498–Tyr-513 the composition is skewed to basic and acidic residues.

The protein belongs to the RRM TET family. Self-oligomerizes (via N-terminal region). Oligomerization is essential for chromatin binding. Component of nuclear riboprotein complexes. Interacts with ILF3, TDRD3 and SF1. Interacts through its C-terminus with SFRS13A. Interacts with OTUB1 and SARNP. Interacts with LRSAM1. Interacts with SAFB1 in a DNA-dependent manner; this interaction tethers FUS to chromatin. Interacts with MATR3. Interacts with SNRNP70 and POLR2A; these interactions couple RNA transcription and splicing. Interacts (through its RNA-binding domain) with RALY (through its RNA-binding domain); both are components of the same RNPs. Post-translationally, phosphorylated in its N-terminal serine residues upon induced DNA damage. ATM and DNA-PK are able to phosphorylate FUS N-terminal region.

The protein localises to the nucleus. In terms of biological role, DNA/RNA-binding protein that plays a role in various cellular processes such as transcription regulation, RNA splicing, RNA transport, DNA repair and damage response. Binds to ssRNA containing the consensus sequence 5'-AGGUAA-3'. Binds to nascent pre-mRNAs and acts as a molecular mediator between RNA polymerase II and U1 small nuclear ribonucleoprotein thereby coupling transcription and splicing. Also binds its own pre-mRNA and autoregulates its expression; this autoregulation mechanism is mediated by non-sense-mediated decay. Plays a role in DNA repair mechanisms by promoting D-loop formation and homologous recombination during DNA double-strand break repair. In neuronal cells, plays crucial roles in dendritic spine formation and stability, RNA transport, mRNA stability and synaptic homeostasis. This chain is RNA-binding protein FUS (FUS), found in Bos taurus (Bovine).